Consider the following 367-residue polypeptide: Alanine racemase (367 aa).

Residue Lys40 is the Proton acceptor; specific for D-alanine of the active site. Lys40 bears the N6-(pyridoxal phosphate)lysine mark. Arg136 provides a ligand contact to substrate. The active-site Proton acceptor; specific for L-alanine is Tyr263. Residue Met310 participates in substrate binding.

It belongs to the alanine racemase family. Requires pyridoxal 5'-phosphate as cofactor.

The catalysed reaction is L-alanine = D-alanine. It functions in the pathway amino-acid biosynthesis; D-alanine biosynthesis; D-alanine from L-alanine: step 1/1. Its function is as follows. Catalyzes the interconversion of L-alanine and D-alanine. May also act on other amino acids. This is Alanine racemase (alr) from Streptococcus thermophilus (strain ATCC BAA-491 / LMD-9).